The sequence spans 299 residues: tRNA dimethylallyltransferase (299 aa).

ATP is bound at residue 11–18 (GPTAVGKT). 13–18 (TAVGKT) contacts substrate. The tract at residues 36-39 (DSQQ) is interaction with substrate tRNA.

Belongs to the IPP transferase family. As to quaternary structure, monomer. Mg(2+) serves as cofactor.

It catalyses the reaction adenosine(37) in tRNA + dimethylallyl diphosphate = N(6)-dimethylallyladenosine(37) in tRNA + diphosphate. Functionally, catalyzes the transfer of a dimethylallyl group onto the adenine at position 37 in tRNAs that read codons beginning with uridine, leading to the formation of N6-(dimethylallyl)adenosine (i(6)A). The protein is tRNA dimethylallyltransferase of Streptococcus pyogenes serotype M28 (strain MGAS6180).